The following is a 221-amino-acid chain: Protein-L-isoaspartate O-methyltransferase (221 aa).

S57 is a catalytic residue.

Belongs to the methyltransferase superfamily. L-isoaspartyl/D-aspartyl protein methyltransferase family.

It localises to the cytoplasm. The catalysed reaction is [protein]-L-isoaspartate + S-adenosyl-L-methionine = [protein]-L-isoaspartate alpha-methyl ester + S-adenosyl-L-homocysteine. Its function is as follows. Catalyzes the methyl esterification of L-isoaspartyl residues in peptides and proteins that result from spontaneous decomposition of normal L-aspartyl and L-asparaginyl residues. It plays a role in the repair and/or degradation of damaged proteins. The sequence is that of Protein-L-isoaspartate O-methyltransferase from Korarchaeum cryptofilum (strain OPF8).